The following is a 202-amino-acid chain: uncharacterized protein (202 aa).

This is an uncharacterized protein from Bacillus anthracis.